Here is a 311-residue protein sequence, read N- to C-terminus: Heme A synthase (311 aa).

Residues 1-6 (MQRFIK) lie on the Cytoplasmic side of the membrane. A helical transmembrane segment spans residues 7 to 27 (WLAVITSLDLLIVLLGGALVT). Over 28–62 (KTGSGQGCGKSWPLCNGEFVPSNLSMETIIELSHR) the chain is Extracellular. A disulfide bond links C35 and C42. Residue E58 is part of the active site. Position 61 (H61) interacts with heme o. Residues 63 to 83 (LTSGSAGILVTLLCILSWKYY) traverse the membrane as a helical segment. At 84 to 91 (KHVRETKT) the chain is on the cytoplasmic side. The chain crosses the membrane as a helical span at residues 92 to 112 (LAILSFVFLVAQALMGAAAVV). Residues 113 to 121 (WGQMPAVLA) are Extracellular-facing. The helical transmembrane segment at 122 to 142 (IHFGISLISFASVILLTCLIF) threads the bilayer. H123 is a binding site for heme o. Topologically, residues 143–159 (EIDQKFDARSLIMDKKM) are cytoplasmic. A helical transmembrane segment spans residues 160–180 (KFHIYGVTIYSYIVVYTGALV). Residues 181 to 211 (RHERASLACPDFPLCSKNRPMPTQLHEWVQM) lie on the Extracellular side of the membrane. C189 and C195 are oxidised to a cystine. The chain crosses the membrane as a helical span at residues 212–232 (GHRVAAMLIFAWILYAMILAI). H213 provides a ligand contact to heme b. Residues 233-243 (RHYKQQPVVYW) lie on the Cytoplasmic side of the membrane. Residues 244–264 (GWIISFILVTLQAVVGVLVVF) traverse the membrane as a helical segment. Residues 265–271 (TNASLAM) lie on the Extracellular side of the membrane. A helical transmembrane segment spans residues 272 to 292 (ALLHSLFISCLFAVLCYLVML). Position 275 (H275) interacts with heme b. Residues 293-311 (GTRSKVNAKEAELTSKQTK) are Cytoplasmic-facing.

This sequence belongs to the COX15/CtaA family. Type 1 subfamily. Interacts with CtaB. It depends on heme b as a cofactor.

Its subcellular location is the cell membrane. The enzyme catalyses Fe(II)-heme o + 2 A + H2O = Fe(II)-heme a + 2 AH2. The protein operates within porphyrin-containing compound metabolism; heme A biosynthesis; heme A from heme O: step 1/1. In terms of biological role, catalyzes the conversion of heme O to heme A by two successive hydroxylations of the methyl group at C8. The first hydroxylation forms heme I, the second hydroxylation results in an unstable dihydroxymethyl group, which spontaneously dehydrates, resulting in the formyl group of heme A. The sequence is that of Heme A synthase from Bacillus cereus (strain ATCC 14579 / DSM 31 / CCUG 7414 / JCM 2152 / NBRC 15305 / NCIMB 9373 / NCTC 2599 / NRRL B-3711).